Reading from the N-terminus, the 424-residue chain is Elongation factor 1-alpha (424 aa).

The 219-residue stretch at 5 to 223 folds into the tr-type G domain; sequence KPHLNLAFIG…NALKEPQKPV (219 aa). The tract at residues 14–21 is G1; it reads GHVDHGKS. A GTP-binding site is contributed by 14–21; it reads GHVDHGKS. S21 is a binding site for Mg(2+). The interval 70–74 is G2; the sequence is GVTID. Positions 91 to 94 are G3; the sequence is DCPG. GTP contacts are provided by residues 91-95 and 146-149; these read DCPGH and NKMD. The tract at residues 146–149 is G4; the sequence is NKMD. The tract at residues 187-189 is G5; the sequence is SAY.

Belongs to the TRAFAC class translation factor GTPase superfamily. Classic translation factor GTPase family. EF-Tu/EF-1A subfamily.

The protein localises to the cytoplasm. It carries out the reaction GTP + H2O = GDP + phosphate + H(+). GTP hydrolase that promotes the GTP-dependent binding of aminoacyl-tRNA to the A-site of ribosomes during protein biosynthesis. The protein is Elongation factor 1-alpha of Methanothrix thermoacetophila (strain DSM 6194 / JCM 14653 / NBRC 101360 / PT) (Methanosaeta thermophila).